Here is a 267-residue protein sequence, read N- to C-terminus: Exosome complex component Rrp42 (267 aa).

This sequence belongs to the RNase PH family. Rrp42 subfamily. Component of the archaeal exosome complex. Forms a hexameric ring-like arrangement composed of 3 Rrp41-Rrp42 heterodimers. The hexameric ring associates with a trimer of Rrp4 and/or Csl4 subunits.

The protein localises to the cytoplasm. Functionally, non-catalytic component of the exosome, which is a complex involved in RNA degradation. Contributes to the structuring of the Rrp41 active site. In Methanopyrus kandleri (strain AV19 / DSM 6324 / JCM 9639 / NBRC 100938), this protein is Exosome complex component Rrp42.